We begin with the raw amino-acid sequence, 532 residues long: Putative L-lactate permease (532 aa).

Transmembrane regions (helical) follow at residues 23–43, 56–76, 101–121, 129–149, 152–172, 180–200, 213–233, 234–254, 274–294, 346–366, 387–407, 420–440, 462–482, and 508–528; these read ALPS…VHLL, VVSA…AILF, VAQL…ASGF, APIL…ALIM, VPVS…ALKL, IGSI…LLAL, IVFI…IAQV, NYEF…VWAA, AGEV…LIVT, LLYV…IPFF, PFIA…GGEH, ISGS…SFFS, GISV…GNMV, and IIPM…LVPL.

It belongs to the lactate permease family.

Its subcellular location is the cell inner membrane. Its function is as follows. May play a role in L-lactate transport. The protein is Putative L-lactate permease of Haemophilus influenzae (strain ATCC 51907 / DSM 11121 / KW20 / Rd).